Reading from the N-terminus, the 428-residue chain is Glutamate-1-semialdehyde 2,1-aminomutase (428 aa).

The residue at position 267 (lysine 267) is an N6-(pyridoxal phosphate)lysine.

The protein belongs to the class-III pyridoxal-phosphate-dependent aminotransferase family. HemL subfamily. In terms of assembly, homodimer. Pyridoxal 5'-phosphate serves as cofactor.

It is found in the cytoplasm. The enzyme catalyses (S)-4-amino-5-oxopentanoate = 5-aminolevulinate. The protein operates within porphyrin-containing compound metabolism; protoporphyrin-IX biosynthesis; 5-aminolevulinate from L-glutamyl-tRNA(Glu): step 2/2. It participates in porphyrin-containing compound metabolism; chlorophyll biosynthesis. This Prochlorococcus marinus (strain MIT 9303) protein is Glutamate-1-semialdehyde 2,1-aminomutase.